Reading from the N-terminus, the 274-residue chain is Type II restriction enzyme HgiBI (274 aa).

Belongs to the TdeIII type II restriction endonuclease family.

It carries out the reaction Endonucleolytic cleavage of DNA to give specific double-stranded fragments with terminal 5'-phosphates.. A P subtype restriction enzyme that recognizes the double-stranded sequence 5'-GGWCC-3' and cleaves after G-1. This system is less active than isoschizomeric RM.HgiEI. The protein is Type II restriction enzyme HgiBI of Herpetosiphon aurantiacus (Herpetosiphon giganteus).